A 795-amino-acid polypeptide reads, in one-letter code: MKFSELWLREWVNPAIDSDALANQITMAGLEVDGVEPVAGSFHGVVVGEVVECAQHPNADKLRVTKVNVGGDRLLDIVCGAPNCRQGLRVAVATIGAVLPGDFKIKAAKLRGEPSEGMLCSFSELGISDDHSGIIELPADAPIGTDIREYLKLDDNTIEISVTPNRADCLGIIGVARDVAVLNQLPLVEPEIVPVGATIDDTLPITVEAPEACPRYLGRVVKGINVKAPTPLWMKEKLRRCGIRSIDAVVDVTNYVLLELGQPMHAFDKDRIEGGIVVRMAKEGETLVLLDGTEAKLNADTLVIADHNKALAMGGIFGGEHSGVNDETQNVLLECAFFSPLSITGRARRHGLHTDASHRYERGVDPALQHKAMERATRLLIDICGGEAGPVIDITNEATLPKRATITLRRSKLDRLIGHHIADEQVTDILRRLGCEVTEGKDEWQAVAPSWRFDMEIEEDLVEEVARVYGYNNIPDEPVQASLIMGTHREADLSLKRVKTLLNDKGYQEVITYSFVDPKVQQMIHPGVEALLLPSPISVEMSAMRLSLWTGLLATVVYNQNRQQNRVRIFESGLRFVPDTQAPLGIRQDLMLAGVICGNRYEEHWNLAKETVDFYDLKGDLESVLDLTGKLNEVEFRAEANPALHPGQSAAIYLKGERIGFVGVVHPELERKLDLNGRTLVFELEWNKLADRVVPQAREISRFPANRRDIAVVVAENVPAADILSECKKVGVNQVVGVNLFDVYRGKGVAEGYKSLAISLILQDTSRTLEEEEIAATVAKCVEALKERFQASLRD.

The tRNA-binding domain maps to 39–148 (AGSFHGVVVG…ADAPIGTDIR (110 aa)). The 76-residue stretch at 401 to 476 (PKRATITLRR…RVYGYNNIPD (76 aa)) folds into the B5 domain. Mg(2+) contacts are provided by Asp-454, Asp-460, Glu-463, and Glu-464. Residues 701–794 (SRFPANRRDI…LKERFQASLR (94 aa)) form the FDX-ACB domain.

Belongs to the phenylalanyl-tRNA synthetase beta subunit family. Type 1 subfamily. Tetramer of two alpha and two beta subunits. The cofactor is Mg(2+).

The protein localises to the cytoplasm. The enzyme catalyses tRNA(Phe) + L-phenylalanine + ATP = L-phenylalanyl-tRNA(Phe) + AMP + diphosphate + H(+). The protein is Phenylalanine--tRNA ligase beta subunit of Shigella sonnei (strain Ss046).